A 401-amino-acid chain; its full sequence is Beta-ketoadipyl-CoA thiolase (401 aa).

Residue C91 is the Acyl-thioester intermediate of the active site. Active-site proton acceptor residues include H357 and C387.

It belongs to the thiolase-like superfamily. Thiolase family. In terms of assembly, homotetramer.

It catalyses the reaction succinyl-CoA + acetyl-CoA = 3-oxoadipyl-CoA + CoA. It participates in aromatic compound metabolism; beta-ketoadipate pathway; acetyl-CoA and succinyl-CoA from 3-oxoadipate: step 2/2. In terms of biological role, catalyzes thiolytic cleavage of beta-ketoadipyl-CoA to succinyl-CoA and acetyl-CoA. The protein is Beta-ketoadipyl-CoA thiolase (pcaF) of Pseudomonas knackmussii (strain DSM 6978 / CCUG 54928 / LMG 23759 / B13).